The sequence spans 280 residues: Cytochrome bc1 complex cytochrome c subunit (280 aa).

Residues 25–45 (LSGGVLLLIALTIAGGLAAVL) form a helical membrane-spanning segment. Cytochrome c domains follow at residues 60 to 140 (ALLR…QANG) and 161 to 239 (NDLG…KVAT). Residues Cys73, Cys76, His77, Cys174, Cys177, and His178 each coordinate heme c. A helical transmembrane segment spans residues 258 to 278 (GMAMWIIGMVAAIGLALWIGA).

The cytochrome bc1 complex is composed of a cytochrome b (QcrB), the Rieske iron-sulfur protein (QcrA) and a diheme cytochrome c (QcrC) subunit. In terms of processing, binds 2 heme c groups covalently per subunit.

It is found in the cell membrane. It carries out the reaction a quinol + 2 Fe(III)-[cytochrome c](out) = a quinone + 2 Fe(II)-[cytochrome c](out) + 2 H(+)(out). Cytochrome b subunit of the cytochrome bc1 complex, an essential component of the respiratory electron transport chain required for ATP synthesis. The bc1 complex catalyzes the oxidation of ubiquinol and the reduction of cytochrome c in the respiratory chain. The bc1 complex operates through a Q-cycle mechanism that couples electron transfer to generation of the proton gradient that drives ATP synthesis. The polypeptide is Cytochrome bc1 complex cytochrome c subunit (qcrC) (Mycobacterium bovis (strain ATCC BAA-935 / AF2122/97)).